The primary structure comprises 275 residues: Putative carbamate hydrolase RutD (275 aa).

This sequence belongs to the AB hydrolase superfamily. Hydrolase RutD family.

The enzyme catalyses carbamate + 2 H(+) = NH4(+) + CO2. Its function is as follows. Involved in pyrimidine catabolism. May facilitate the hydrolysis of carbamate, a reaction that can also occur spontaneously. This Escherichia coli O6:H1 (strain CFT073 / ATCC 700928 / UPEC) protein is Putative carbamate hydrolase RutD.